A 375-amino-acid polypeptide reads, in one-letter code: Neuropeptide Y receptor type 4 (375 aa).

Over 1–39 (MNTSHFLAPLFPGSLQGKNGTNPLDSPYNFSDGCQDSAE) the chain is Extracellular. Asn2, Asn19, and Asn29 each carry an N-linked (GlcNAc...) asparagine glycan. Residues 40–60 (LLAFIITTYSIETILGVLGNL) traverse the membrane as a helical segment. Residues 61–78 (CLIFVTTRQKEKSNVTNL) lie on the Cytoplasmic side of the membrane. The helical transmembrane segment at 79 to 99 (LIANLAFSDFLMCLICQPLTV) threads the bilayer. The Extracellular portion of the chain corresponds to 100 to 116 (TYTIMDYWIFGEVLCKM). The cysteines at positions 114 and 201 are disulfide-linked. The helical transmembrane segment at 117-137 (LTFIQCMSVTVSILSLVLVAL) threads the bilayer. Over 138-155 (ERHQLIINPTGWKPSIFQ) the chain is Cytoplasmic. A helical membrane pass occupies residues 156 to 176 (AYLGIVVIWFVSCFLSLPFLA). Over 177-211 (NSTLNDLFHYNHSKVVEFLEDKVVCFVSWSSDHHR) the chain is Extracellular. Residue Asn187 is glycosylated (N-linked (GlcNAc...) asparagine). A helical membrane pass occupies residues 212–232 (LIYTTFLLLFQYCIPLAFILV). The Cytoplasmic segment spans residues 233-266 (CYIRIYQRLQRQKHVFHAHACSSRAGQMKRINSM). The chain crosses the membrane as a helical span at residues 267 to 287 (LMTMVTAFAVLWLPLHVFNTL). Topologically, residues 288-301 (EDWYQEAIPACHGN) are extracellular. The helical transmembrane segment at 302–322 (LIFLMCHLLAMASTCVNPFIY) threads the bilayer. The Cytoplasmic portion of the chain corresponds to 323 to 375 (GFLNINFKKDIKALVLTCHCRSPRGESEHLPLSTVHTDLSKGSMRMGSKSNFI). A lipid anchor (S-palmitoyl cysteine) is attached at Cys340.

The protein belongs to the G-protein coupled receptor 1 family. Heart, detected in small intestine.

The protein resides in the cell membrane. G protein-coupled receptor for PPY/pancreatic polypeptide/PP that is negatively coupled to cAMP. Has much lower affinity for the NPY/neuropeptide Y and PYY/peptide YY. This Mus musculus (Mouse) protein is Neuropeptide Y receptor type 4 (Npy4r).